A 373-amino-acid polypeptide reads, in one-letter code: Alanine racemase (373 aa).

The active-site Proton acceptor; specific for D-alanine is the Lys40. Lys40 carries the N6-(pyridoxal phosphate)lysine modification. A substrate-binding site is contributed by Arg140. The Proton acceptor; specific for L-alanine role is filled by Tyr268. Substrate is bound at residue Met315.

This sequence belongs to the alanine racemase family. Requires pyridoxal 5'-phosphate as cofactor.

The enzyme catalyses L-alanine = D-alanine. It functions in the pathway amino-acid biosynthesis; D-alanine biosynthesis; D-alanine from L-alanine: step 1/1. Its function is as follows. Catalyzes the interconversion of L-alanine and D-alanine. May also act on other amino acids. This Levilactobacillus brevis (strain ATCC 367 / BCRC 12310 / CIP 105137 / JCM 1170 / LMG 11437 / NCIMB 947 / NCTC 947) (Lactobacillus brevis) protein is Alanine racemase (alr).